We begin with the raw amino-acid sequence, 909 residues long: Yellow mounds protein A (909 aa).

Positions 7 to 283 constitute an MIF4G domain; sequence LNVVSRILNK…KNLFELKNNK (277 aa). 5 disordered regions span residues 178–232, 415–439, 460–537, 627–689, and 704–774; these read SMGG…NNNI, MESSSNNNNSNSQLQFSLSSSSGIK, INLP…SSAP, VPPV…SEAR, and SLSG…AKKH. The span at 204–215 shows a compositional bias: acidic residues; sequence DDDDHDEEDNEN. 2 stretches are compositionally biased toward low complexity: residues 216–231 and 417–436; these read NYENTTSTTNNINNNN and SSSNNNNSNSQLQFSLSSSS. Positions 473 to 490 are enriched in polar residues; that stretch reads RSNSPSLSSVVKQPQSQQ. Positions 491–525 are enriched in low complexity; the sequence is NNNNNNNNNNNNTTITTTTSSNNNINNNNNNNNNN. Residues 721-738 show a composition bias toward polar residues; sequence STPTLKSTPAIVQNGGSI. Low complexity predominate over residues 739 to 756; the sequence is TSTSSSSSSSSSSSSSTT. Residues 845–877 adopt a coiled-coil conformation; sequence TMLFDLEEMAQEQQNLEKQNDQQQNLLTQNNQI.

Plays as essential role in regulating terminal differentiation. This Dictyostelium discoideum (Social amoeba) protein is Yellow mounds protein A (yelA).